The sequence spans 534 residues: Putative fimbrium tip subunit Fim1C (534 aa).

A signal peptide spans 1 to 21 (MKQYKLMQVALLAILLFGWAG). C22 carries the N-palmitoyl cysteine lipid modification. C22 carries S-diacylglycerol cysteine lipidation. A propeptide spanning residues 22–54 (CSQNEEEVPGNVRNGIVLNVTDTGIISNEPSTR) is cleaved from the precursor.

The protein belongs to the bacteroidetes fimbrillin superfamily. Mfa-like family. In terms of assembly, may be part of the fimbrial tip.

The protein resides in the fimbrium. The protein localises to the cell outer membrane. Its function is as follows. Probably a component of the fimbrium tip. Fimbriae are filamentous appendages on the cell surface that mediate cell adhesion and biofilm formation. The protein is Putative fimbrium tip subunit Fim1C of Bacteroides ovatus (strain ATCC 8483 / DSM 1896 / JCM 5824 / BCRC 10623 / CCUG 4943 / NCTC 11153).